A 41-amino-acid chain; its full sequence is Protein UL21 homolog (41 aa).

The protein belongs to the herpesviridae UL21 family.

This is Protein UL21 homolog from Equine herpesvirus 4 (strain 1942) (EHV-4).